The sequence spans 476 residues: Sulfite exporter TauE/SafE family protein 3 (476 aa).

The next 12 helical transmembrane spans lie at 8-28, 76-92, 99-115, 120-142, 151-171, 172-192, 257-277, 291-311, 339-359, 360-380, 397-417, and 433-453; these read WLGL…FAFV, FNWQ…FGAA, VGGG…IIGF, ATAI…NLRL, IIDY…ISIG, VAFN…VLFL, VYWK…ALQI, VINL…AVAL, FGII…FIMG, PLFL…TFAM, FPVP…WVGQ, and IIFI…GVGI.

This sequence belongs to the 4-toluene sulfonate uptake permease (TSUP) (TC 2.A.102) family.

The protein resides in the membrane. The protein is Sulfite exporter TauE/SafE family protein 3 of Arabidopsis thaliana (Mouse-ear cress).